A 258-amino-acid chain; its full sequence is L-aspartate dehydrogenase 1 (258 aa).

NAD(+) is bound by residues Ala-121 and Asn-181. His-211 is a catalytic residue.

It belongs to the L-aspartate dehydrogenase family.

It carries out the reaction L-aspartate + NADP(+) + H2O = oxaloacetate + NH4(+) + NADPH + H(+). The enzyme catalyses L-aspartate + NAD(+) + H2O = oxaloacetate + NH4(+) + NADH + H(+). Its pathway is cofactor biosynthesis; NAD(+) biosynthesis; iminoaspartate from L-aspartate (dehydrogenase route): step 1/1. Functionally, specifically catalyzes the NAD or NADP-dependent dehydrogenation of L-aspartate to iminoaspartate. The polypeptide is L-aspartate dehydrogenase 1 (Bordetella parapertussis (strain 12822 / ATCC BAA-587 / NCTC 13253)).